Consider the following 395-residue polypeptide: ATP phosphoribosyltransferase regulatory subunit (395 aa).

It belongs to the class-II aminoacyl-tRNA synthetase family. HisZ subfamily. In terms of assembly, heteromultimer composed of HisG and HisZ subunits.

It localises to the cytoplasm. It functions in the pathway amino-acid biosynthesis; L-histidine biosynthesis; L-histidine from 5-phospho-alpha-D-ribose 1-diphosphate: step 1/9. Functionally, required for the first step of histidine biosynthesis. May allow the feedback regulation of ATP phosphoribosyltransferase activity by histidine. The protein is ATP phosphoribosyltransferase regulatory subunit of Pseudomonas entomophila (strain L48).